The sequence spans 85 residues: Large ribosomal subunit protein bL27 (85 aa).

It belongs to the bacterial ribosomal protein bL27 family.

The protein is Large ribosomal subunit protein bL27 of Azobacteroides pseudotrichonymphae genomovar. CFP2.